A 220-amino-acid chain; its full sequence is MTIHKEGYRSLFYVSAFLFLLNFLIYYFFPEASILQKTVLVISLLIFLVVLQFFRNPSRTIEINDNQIIAPADGKVVVIEEVIETEYFNEKRRQISIFMSPFNVHSNRNAVSGIVKFFKYHPGKFLVAWHPKSSTENERTTTVVQTKNNEQILMRQIAGALARRIVWYIDENSKVTQGEEFGFIKFGSRVDLFIPLDAKVKVSLNQTTVGGKTVIAEFYS.

Serine 188 serves as the catalytic Schiff-base intermediate with substrate; via pyruvic acid. Serine 188 is modified (pyruvic acid (Ser); by autocatalysis).

This sequence belongs to the phosphatidylserine decarboxylase family. PSD-A subfamily. Heterodimer of a large membrane-associated beta subunit and a small pyruvoyl-containing alpha subunit. It depends on pyruvate as a cofactor. Is synthesized initially as an inactive proenzyme. Formation of the active enzyme involves a self-maturation process in which the active site pyruvoyl group is generated from an internal serine residue via an autocatalytic post-translational modification. Two non-identical subunits are generated from the proenzyme in this reaction, and the pyruvate is formed at the N-terminus of the alpha chain, which is derived from the carboxyl end of the proenzyme. The post-translation cleavage follows an unusual pathway, termed non-hydrolytic serinolysis, in which the side chain hydroxyl group of the serine supplies its oxygen atom to form the C-terminus of the beta chain, while the remainder of the serine residue undergoes an oxidative deamination to produce ammonia and the pyruvoyl prosthetic group on the alpha chain.

It localises to the cell membrane. It carries out the reaction a 1,2-diacyl-sn-glycero-3-phospho-L-serine + H(+) = a 1,2-diacyl-sn-glycero-3-phosphoethanolamine + CO2. It functions in the pathway phospholipid metabolism; phosphatidylethanolamine biosynthesis; phosphatidylethanolamine from CDP-diacylglycerol: step 2/2. Its function is as follows. Catalyzes the formation of phosphatidylethanolamine (PtdEtn) from phosphatidylserine (PtdSer). The sequence is that of Phosphatidylserine decarboxylase proenzyme from Cytophaga hutchinsonii (strain ATCC 33406 / DSM 1761 / CIP 103989 / NBRC 15051 / NCIMB 9469 / D465).